The sequence spans 952 residues: Leucine--tRNA ligase (952 aa).

Residues 65–76 (PYPSGAGLHVGH) carry the 'HIGH' region motif. A 'KMSKS' region motif is present at residues 727-731 (KMGKS). Position 730 (Lys-730) interacts with ATP.

This sequence belongs to the class-I aminoacyl-tRNA synthetase family.

Its subcellular location is the cytoplasm. It catalyses the reaction tRNA(Leu) + L-leucine + ATP = L-leucyl-tRNA(Leu) + AMP + diphosphate. The polypeptide is Leucine--tRNA ligase (Salinispora arenicola (strain CNS-205)).